The following is a 312-amino-acid chain: Pantothenate kinase (312 aa).

An ATP-binding site is contributed by 97-104 (GSVAVGKS).

It belongs to the prokaryotic pantothenate kinase family.

Its subcellular location is the cytoplasm. It catalyses the reaction (R)-pantothenate + ATP = (R)-4'-phosphopantothenate + ADP + H(+). The protein operates within cofactor biosynthesis; coenzyme A biosynthesis; CoA from (R)-pantothenate: step 1/5. The polypeptide is Pantothenate kinase (Mycobacterium sp. (strain JLS)).